The chain runs to 234 residues: Sperm flagellar protein 1 (234 aa).

A Calponin-homology (CH) domain is found at 7–112; it reads EEALHQLYLW…VLIPLRQRLE (106 aa). Residues 181 to 234 form an essential for homodimerization and microtubule bundling activity region; that stretch reads VLQIAEKEQELLASQETVQVLQMKVKRLEHLLQLKNVRIDDLSRRLQQAERKQR.

In terms of assembly, homodimer. Interacts with actin, TJP1, CGN and CDH1. Expressed predominantly in the seminiferous epithelium of adult testis. Expressed in pillar cells of the organ of Corti (at protein level). Expressed in brain, kidney, lung and testis. Highly expressed in the trachea, lung and oviduct.

Its subcellular location is the cytoplasm. The protein resides in the cell projection. The protein localises to the cilium. It localises to the flagellum. It is found in the cytoskeleton. Its subcellular location is the cilium axoneme. The protein resides in the apical cell membrane. The protein localises to the basolateral cell membrane. It localises to the stress fiber. It is found in the microvillus. Its subcellular location is the lamellipodium. The protein resides in the filopodium. Functionally, microtubule-associated protein that promotes microtubule bundling and stabilizes microtubules against depolymerization in response to cold shock. Microtubule-associated protein involved in the stabilization of microtubules along the axis of migration during radial intercalation. Promotes the establishment and stabilization of an axis of microtubules required for the active migration of cells into the outer epithelium. Essential for ciliary central apparatus formation which requires both its microtubule-binding and bundling activities and for ciliary localization of HYDIN and SPAG6 in ependymal cilia. Binds actin in intestinal epithelial cells (IECs), essential for IECs survival and contributes to formation of filopodia and lamellipodia in migrating IECs. Regulates planar cell polarity signaling pathway and asymmetric microtubule accumulation in ciliated epithelia. In Mus musculus (Mouse), this protein is Sperm flagellar protein 1 (Spef1).